A 271-amino-acid polypeptide reads, in one-letter code: Proteasome inhibitor PI31 subunit (271 aa).

At Ala2 the chain carries N-acetylalanine. The interval 2–150 (AGLEVLFASA…PIHEQWEKVR (149 aa)) is important for homodimerization and interaction with FBXO7. A phosphoserine mark is found at Ser153 and Ser189. Arg205 bears the Omega-N-methylarginine mark. An Asymmetric dimethylarginine modification is found at Arg219. The disordered stretch occupies residues 221–271 (LIDPSSGLPNRLPPGAVPPGARFDPFGPIGTSPSGPNPDHLPPPGYDDMYL). The residue at position 231 (Arg231) is an Omega-N-methylarginine. Residue Ser252 is modified to Phosphoserine. Over residues 255–265 (GPNPDHLPPPG) the composition is skewed to pro residues.

Belongs to the proteasome inhibitor PI31 family. As to quaternary structure, monomer and homodimer. Interacts with FBXO7.

It is found in the cytoplasm. The protein localises to the endoplasmic reticulum. Functionally, plays an important role in control of proteasome function. Inhibits the hydrolysis of protein and peptide substrates by the 20S proteasome. Also inhibits the activation of the proteasome by the proteasome regulatory proteins PA700 and PA28. In Rattus norvegicus (Rat), this protein is Proteasome inhibitor PI31 subunit (Psmf1).